Reading from the N-terminus, the 290-residue chain is Picrinine-N-methytransferase TMT4 (290 aa).

The interval 71 to 80 is SAM motif I; the sequence is MLDVGCGIGG. The Vacuolar targeting signal signature appears at 133 to 139; that stretch reads DGTFDVV. Residues 134–142 form an SAM motif II region; sequence GTFDVVFTI. Positions 161–170 are SAM motif III; that stretch reads VAAPGAAIVI.

This sequence belongs to the class I-like SAM-binding methyltransferase superfamily. gTMT family. As to quaternary structure, homodimer.

It is found in the vacuole membrane. It catalyses the reaction picrinine + S-adenosyl-L-methionine = ervincine + S-adenosyl-L-homocysteine + H(+). The protein operates within alkaloid biosynthesis; vindoline biosynthesis. Functionally, S-adenosyl-L-methionine-dependent N-methyltransferase involved in the biosynthesis of biologically active monoterpenoid indole alkaloids (MIAs) natural products including vindoline. Catalyzes the conversion of picrinine to N-methylpicrinine (ervincine). The polypeptide is Picrinine-N-methytransferase TMT4 (Catharanthus roseus (Madagascar periwinkle)).